Reading from the N-terminus, the 158-residue chain is Ribosome maturation factor RimP (158 aa).

It belongs to the RimP family.

It is found in the cytoplasm. In terms of biological role, required for maturation of 30S ribosomal subunits. This chain is Ribosome maturation factor RimP, found in Lactobacillus acidophilus (strain ATCC 700396 / NCK56 / N2 / NCFM).